A 144-amino-acid polypeptide reads, in one-letter code: Ribosomal RNA large subunit methyltransferase H (144 aa).

S-adenosyl-L-methionine contacts are provided by residues Leu-63, Gly-92, and 111-116; that span reads LSPLTF.

This sequence belongs to the RNA methyltransferase RlmH family. In terms of assembly, homodimer.

The protein resides in the cytoplasm. The enzyme catalyses pseudouridine(1915) in 23S rRNA + S-adenosyl-L-methionine = N(3)-methylpseudouridine(1915) in 23S rRNA + S-adenosyl-L-homocysteine + H(+). Its function is as follows. Specifically methylates the pseudouridine at position 1915 (m3Psi1915) in 23S rRNA. The polypeptide is Ribosomal RNA large subunit methyltransferase H (Synechococcus sp. (strain CC9902)).